The sequence spans 427 residues: Glutamate-1-semialdehyde 2,1-aminomutase (427 aa).

The residue at position 265 (K265) is an N6-(pyridoxal phosphate)lysine.

It belongs to the class-III pyridoxal-phosphate-dependent aminotransferase family. HemL subfamily. As to quaternary structure, homodimer. It depends on pyridoxal 5'-phosphate as a cofactor.

It is found in the cytoplasm. It carries out the reaction (S)-4-amino-5-oxopentanoate = 5-aminolevulinate. Its pathway is porphyrin-containing compound metabolism; protoporphyrin-IX biosynthesis; 5-aminolevulinate from L-glutamyl-tRNA(Glu): step 2/2. This chain is Glutamate-1-semialdehyde 2,1-aminomutase, found in Neisseria meningitidis serogroup C (strain 053442).